The sequence spans 332 residues: Glyceraldehyde-3-phosphate dehydrogenase (332 aa).

Residues 10 to 11 (RI), Asp-36, Lys-81, and Ser-116 contribute to the NAD(+) site. D-glyceraldehyde 3-phosphate contacts are provided by residues 150–152 (SCT), Thr-181, Arg-197, 210–211 (TK), and Arg-233. Residue Cys-151 is the Nucleophile of the active site. Asn-314 is an NAD(+) binding site.

The protein belongs to the glyceraldehyde-3-phosphate dehydrogenase family. In terms of assembly, homotetramer.

It localises to the cytoplasm. The catalysed reaction is D-glyceraldehyde 3-phosphate + phosphate + NAD(+) = (2R)-3-phospho-glyceroyl phosphate + NADH + H(+). The protein operates within carbohydrate degradation; glycolysis; pyruvate from D-glyceraldehyde 3-phosphate: step 1/5. Catalyzes the oxidative phosphorylation of glyceraldehyde 3-phosphate (G3P) to 1,3-bisphosphoglycerate (BPG) using the cofactor NAD. The first reaction step involves the formation of a hemiacetal intermediate between G3P and a cysteine residue, and this hemiacetal intermediate is then oxidized to a thioester, with concomitant reduction of NAD to NADH. The reduced NADH is then exchanged with the second NAD, and the thioester is attacked by a nucleophilic inorganic phosphate to produce BPG. This Helicobacter pylori (strain J99 / ATCC 700824) (Campylobacter pylori J99) protein is Glyceraldehyde-3-phosphate dehydrogenase (gapA).